The following is a 415-amino-acid chain: Dynein assembly factor with WD repeat domains 1 (415 aa).

8 WD repeats span residues 90-129, 132-172, 175-214, 217-256, 259-298, 301-340, 343-384, and 385-415; these read AHIL…ELHT, GHRN…CFYT, GHTA…EVST, GHFA…KVHV, GHRG…CLAT, GHND…CLCQ, GHKG…QVLE, and GHSD…RIWH.

It belongs to the WD repeat WDR69 family. As to expression, expressed in organs bearing motile cilia, including the pronephros, otic vesicles and Kupffer's vesicle.

It localises to the cytoplasm. It is found in the cytoskeleton. The protein localises to the flagellum basal body. The protein resides in the flagellum axoneme. Required for axonemal dynein assembly and ciliary motility in ciliated organs, including Kupffer's vesicle, during embryogenesis. Facilitates the onset of robust cilia motility during development. The chain is Dynein assembly factor with WD repeat domains 1 (daw1) from Danio rerio (Zebrafish).